The sequence spans 151 residues: Myosin light polypeptide 6 (151 aa).

N-acetylcysteine is present on C2. In terms of domain architecture, EF-hand 1 spans 7 to 42 (DQTAEFKEAFQLFDRTGDGKILYSQCGDVMRALGQN). A Phosphoserine modification is found at S57. At K81 the chain carries N6-acetyllysine. The region spanning 84-119 (GTYEDYVEGLRVFDKEGNGTVMGAEIRHVLVTLGEK) is the EF-hand 2 domain.

As to quaternary structure, myosin is a hexamer of 2 heavy chains and 4 light chains. Interacts with SPATA6.

Functionally, regulatory light chain of myosin. Does not bind calcium. The polypeptide is Myosin light polypeptide 6 (MYL6) (Bos taurus (Bovine)).